A 150-amino-acid polypeptide reads, in one-letter code: Small ribosomal subunit protein uS7cz/uS7cy (150 aa).

It belongs to the universal ribosomal protein uS7 family. In terms of assembly, part of the 30S ribosomal subunit.

It is found in the plastid. The protein localises to the chloroplast. In terms of biological role, one of the primary rRNA binding proteins, it binds directly to 16S rRNA where it nucleates assembly of the head domain of the 30S subunit. This chain is Small ribosomal subunit protein uS7cz/uS7cy (rps7-A), found in Adiantum capillus-veneris (Maidenhair fern).